The sequence spans 332 residues: UPF0194 membrane protein YbhG (332 aa).

The signal sequence occupies residues 1–16; the sequence is MMKKPVVIGLAVVVLA. A coiled-coil region spans residues 107–209; the sequence is NEEIAQAAAA…LNLQDSTLIA (103 aa).

This sequence belongs to the UPF0194 family.

It localises to the periplasm. This Escherichia coli (strain K12 / MC4100 / BW2952) protein is UPF0194 membrane protein YbhG.